The primary structure comprises 394 residues: Mannosyl-3-phosphoglycerate synthase (394 aa).

This sequence belongs to the glycosyltransferase 2 family.

The protein localises to the cytoplasm. The catalysed reaction is (2R)-3-phosphoglycerate + GDP-alpha-D-mannose = 2-O-(alpha-D-mannosyl)-3-phosphoglycerate + GDP + H(+). It functions in the pathway carbohydrate biosynthesis; 2-(alpha-D-mannosyl)-D-glycerate biosynthesis; 2-(alpha-D-mannosyl)-D-glycerate from GDP-alpha-D-mannose (MPG route): step 1/2. Transfers a mannosyl group from GDP-mannose to phosphoglycerate to form mannosyl-3-phosphoglycerate (MPG). This Pyrococcus furiosus (strain ATCC 43587 / DSM 3638 / JCM 8422 / Vc1) protein is Mannosyl-3-phosphoglycerate synthase (mngA).